Here is a 615-residue protein sequence, read N- to C-terminus: Delta-like protein B (615 aa).

The first 20 residues, 1 to 20, serve as a signal peptide directing secretion; sequence MAHLSLYCLLSVSLLQLVAS. The Extracellular segment spans residues 21–522; it reads SGVFELKVHS…VGQTSPSAVA (502 aa). A DSL domain is found at 159-203; it reads VFCDEFYFGEACSDYCRPRDDTLGHYTCDENGNKECLVGWQGDYC. Intrachain disulfides connect Cys-161–Cys-170, Cys-174–Cys-186, Cys-194–Cys-203, Cys-208–Cys-219, Cys-212–Cys-225, Cys-227–Cys-236, Cys-245–Cys-250, Cys-258–Cys-267, Cys-274–Cys-286, Cys-280–Cys-296, Cys-298–Cys-307, Cys-314–Cys-325, Cys-319–Cys-334, Cys-336–Cys-345, Cys-352–Cys-363, Cys-357–Cys-373, Cys-375–Cys-384, Cys-391–Cys-402, Cys-396–Cys-411, Cys-413–Cys-422, Cys-429–Cys-440, Cys-434–Cys-449, Cys-451–Cys-460, Cys-467–Cys-478, Cys-472–Cys-487, and Cys-489–Cys-498. 3 EGF-like domains span residues 204-237, 241-268, and 270-308; these read SDPI…PSCS, HYPG…LFCN, and DLNY…TNCE. In terms of domain architecture, EGF-like 4; calcium-binding spans 310–346; the sequence is EINECDCNPCKNGGSCNDLENDYSCTCPQGFYGKNCE. EGF-like domains follow at residues 348–385 and 387–423; these read IAMT…SNCE and RLDR…SRCE. One can recognise an EGF-like 7; calcium-binding domain in the interval 425-461; the sequence is NIDDCARYPCQNAGTCQDGINDYTCTCTLGFTGKNCS. Asn-459 carries an N-linked (GlcNAc...) asparagine glycan. The EGF-like 8 domain occupies 463–499; the sequence is RADACLTNPCLHGGTCFTHFSGPVCQCVPGFMGSTCE. A helical membrane pass occupies residues 523-543; sequence VSCVLGVLAVFLGVCVGLVVL. Residues 544–615 lie on the Cytoplasmic side of the membrane; sequence RRRRHRLRRQ…FLWSAGGGLR (72 aa).

In terms of processing, ubiquitinated by mib, leading to its endocytosis and subsequent degradation.

It is found in the membrane. Acts as a ligand for Notch receptors and is involved in primary neurogenesis. Can activate Notch receptors, thereby playing a key role in lateral inhibition, a process that prevents the immediate neighbors of each nascent neural cell from simultaneously embarking on neural differentiation. The sequence is that of Delta-like protein B (dlb) from Danio rerio (Zebrafish).